The chain runs to 722 residues: D-galactosyl-beta-1-&gt;4-L-rhamnose phosphorylase (722 aa).

The active-site Proton donor is D319.

This sequence belongs to the glycoside hydrolase 112 family.

It catalyses the reaction beta-D-galactosyl-(1-&gt;4)-L-rhamnose + phosphate = alpha-D-galactose 1-phosphate + L-rhamnopyranose. Its function is as follows. Reversibly phosphorolyzes beta-D-galactosyl-(1-&gt;4)-L-rhamnose to form alpha-D-galactose 1-phosphate and L-rhamnose. Does not phosphorolyze galacto-N-biose or lacto-N-biose. In the reverse reaction, has the highest activity toward L-rhamnose, also has activity toward L-mannose, and low activity toward L-lyxose, D-glucose, 2-deoxy-D-glucose and D-galactose. This is D-galactosyl-beta-1-&gt;4-L-rhamnose phosphorylase from Lachnoclostridium phytofermentans (strain ATCC 700394 / DSM 18823 / ISDg) (Clostridium phytofermentans).